A 363-amino-acid chain; its full sequence is Ribosomal RNA large subunit methyltransferase M (363 aa).

S-adenosyl-L-methionine-binding positions include S190, 223–226 (CPGG), D242, D262, and D279. The Proton acceptor role is filled by K308.

This sequence belongs to the class I-like SAM-binding methyltransferase superfamily. RNA methyltransferase RlmE family. RlmM subfamily. As to quaternary structure, monomer.

It is found in the cytoplasm. It catalyses the reaction cytidine(2498) in 23S rRNA + S-adenosyl-L-methionine = 2'-O-methylcytidine(2498) in 23S rRNA + S-adenosyl-L-homocysteine + H(+). Functionally, catalyzes the 2'-O-methylation at nucleotide C2498 in 23S rRNA. The polypeptide is Ribosomal RNA large subunit methyltransferase M (Vibrio vulnificus (strain CMCP6)).